The following is an 88-amino-acid chain: MTELFNPDNPWETALLFFAVFCSVLPALLPFWFKIKKIDSQVSNSHDENLRDEITRGFKEVREDIRLLHEALNIERRERIAGDEKRCA.

The chain is Gene 30 protein (30) from Mycobacterium (Mycobacteriophage D29).